Reading from the N-terminus, the 222-residue chain is Probable transaldolase (222 aa).

The active-site Schiff-base intermediate with substrate is the Lys-91.

Belongs to the transaldolase family. Type 3B subfamily.

Its subcellular location is the cytoplasm. It catalyses the reaction D-sedoheptulose 7-phosphate + D-glyceraldehyde 3-phosphate = D-erythrose 4-phosphate + beta-D-fructose 6-phosphate. Its pathway is carbohydrate degradation; pentose phosphate pathway; D-glyceraldehyde 3-phosphate and beta-D-fructose 6-phosphate from D-ribose 5-phosphate and D-xylulose 5-phosphate (non-oxidative stage): step 2/3. Its function is as follows. Transaldolase is important for the balance of metabolites in the pentose-phosphate pathway. In Chlorobium limicola (strain DSM 245 / NBRC 103803 / 6330), this protein is Probable transaldolase.